The following is a 431-amino-acid chain: Transcription factor Sp7 (431 aa).

A disordered region spans residues 30–56 (SSPLRDSTTLGKAGTKKPYSVGSDLSA). Residues Lys41 and Lys45 each carry the N6-propionyllysine modification. Lys58 is covalently cross-linked (Glycyl lysine isopeptide (Lys-Gly) (interchain with G-Cter in ubiquitin)). Disordered stretches follow at residues 71–115 (TNGL…VPKG) and 154–260 (TPTP…SGGY). A 9aaTAD motif is present at residues 156–164 (TPWWDMHPG). The segment covering 166 to 178 (NWLGGGQGQGDGL) has biased composition (gly residues). Lys230 participates in a covalent cross-link: Glycyl lysine isopeptide (Lys-Gly) (interchain with G-Cter in ubiquitin). 3 C2H2-type zinc fingers span residues 294 to 318 (HSCHIPGCGKVYGKASHLKAHLRWH), 324 to 348 (FVCNWLFCGKRFTRSDELERHVRTH), and 354 to 376 (FTCLLCSKRFTRSDHLSKHQRTH). N6-propionyllysine is present on residues Lys361 and Lys371. Residues 367-431 (DHLSKHQRTH…SPEQSNLLEI (65 aa)) form a disordered region. Positions 403–412 (SQTPRPSASP) are enriched in polar residues.

It belongs to the Sp1 C2H2-type zinc-finger protein family. Interacts with RIOX1; the interaction is direct and inhibits transcription activator activity. In terms of processing, ubiquitination at leads to proteasomal degradation. SP7 is a short-live protein with an endogenous half-life of approximately 12 hours. Propionylated. Depropionylation at Lys-371 by SIRT7 activates transcription factor activity and positively regulates bone formation by osteoblasts. As to expression, restricted to bone-derived cell.

It localises to the nucleus. Transcriptional activator essential for osteoblast differentiation. Binds to SP1 and EKLF consensus sequences and to other G/C-rich sequences. The protein is Transcription factor Sp7 (SP7) of Homo sapiens (Human).